The primary structure comprises 444 residues: Chromosomal replication initiator protein DnaA (444 aa).

The interval methionine 1 to lysine 66 is domain I, interacts with DnaA modulators. Positions lysine 66–threonine 100 are domain II. Positions proline 101 to glutamine 317 are domain III, AAA+ region. 4 residues coordinate ATP: glycine 144, glycine 146, lysine 147, and threonine 148. The tract at residues glutamine 318–valine 444 is domain IV, binds dsDNA.

It belongs to the DnaA family. Oligomerizes as a right-handed, spiral filament on DNA at oriC.

Its subcellular location is the cytoplasm. Plays an essential role in the initiation and regulation of chromosomal replication. ATP-DnaA binds to the origin of replication (oriC) to initiate formation of the DNA replication initiation complex once per cell cycle. Binds the DnaA box (a 9 base pair repeat at the origin) and separates the double-stranded (ds)DNA. Forms a right-handed helical filament on oriC DNA; dsDNA binds to the exterior of the filament while single-stranded (ss)DNA is stabiized in the filament's interior. The ATP-DnaA-oriC complex binds and stabilizes one strand of the AT-rich DNA unwinding element (DUE), permitting loading of DNA polymerase. After initiation quickly degrades to an ADP-DnaA complex that is not apt for DNA replication. Binds acidic phospholipids. The protein is Chromosomal replication initiator protein DnaA of Pseudothermotoga lettingae (strain ATCC BAA-301 / DSM 14385 / NBRC 107922 / TMO) (Thermotoga lettingae).